A 599-amino-acid chain; its full sequence is Aspartate--tRNA ligase (599 aa).

Glutamate 180 contributes to the L-aspartate binding site. The aspartate stretch occupies residues 204–207; that stretch reads QIFK. Arginine 226 serves as a coordination point for L-aspartate. ATP is bound by residues 226–228 and glutamine 235; that span reads RDE. Histidine 454 lines the L-aspartate pocket. Glutamate 488 is an ATP binding site. Residue arginine 495 coordinates L-aspartate. 540 to 543 serves as a coordination point for ATP; the sequence is GLDR.

This sequence belongs to the class-II aminoacyl-tRNA synthetase family. Type 1 subfamily. As to quaternary structure, homodimer.

It is found in the cytoplasm. It catalyses the reaction tRNA(Asp) + L-aspartate + ATP = L-aspartyl-tRNA(Asp) + AMP + diphosphate. Its function is as follows. Catalyzes the attachment of L-aspartate to tRNA(Asp) in a two-step reaction: L-aspartate is first activated by ATP to form Asp-AMP and then transferred to the acceptor end of tRNA(Asp). The sequence is that of Aspartate--tRNA ligase from Clostridium botulinum (strain Eklund 17B / Type B).